We begin with the raw amino-acid sequence, 555 residues long: 2-succinyl-5-enolpyruvyl-6-hydroxy-3-cyclohexene-1-carboxylate synthase (555 aa).

Belongs to the TPP enzyme family. MenD subfamily. In terms of assembly, homodimer. Mg(2+) serves as cofactor. Mn(2+) is required as a cofactor. The cofactor is thiamine diphosphate.

The catalysed reaction is isochorismate + 2-oxoglutarate + H(+) = 5-enolpyruvoyl-6-hydroxy-2-succinyl-cyclohex-3-ene-1-carboxylate + CO2. It participates in quinol/quinone metabolism; 1,4-dihydroxy-2-naphthoate biosynthesis; 1,4-dihydroxy-2-naphthoate from chorismate: step 2/7. Its pathway is quinol/quinone metabolism; menaquinone biosynthesis. Functionally, catalyzes the thiamine diphosphate-dependent decarboxylation of 2-oxoglutarate and the subsequent addition of the resulting succinic semialdehyde-thiamine pyrophosphate anion to isochorismate to yield 2-succinyl-5-enolpyruvyl-6-hydroxy-3-cyclohexene-1-carboxylate (SEPHCHC). The sequence is that of 2-succinyl-5-enolpyruvyl-6-hydroxy-3-cyclohexene-1-carboxylate synthase from Bacteroides fragilis (strain ATCC 25285 / DSM 2151 / CCUG 4856 / JCM 11019 / LMG 10263 / NCTC 9343 / Onslow / VPI 2553 / EN-2).